The sequence spans 301 residues: Probable alpha-L-glutamate ligase (301 aa).

The ATP-grasp domain maps to 104–287 (LQLLSRKGIG…VADMIFEFIE (184 aa)). Residues K141, 178 to 179 (EF), D187, and 211 to 213 (RSN) contribute to the ATP site. 3 residues coordinate Mg(2+): D248, E260, and N262. Mn(2+) contacts are provided by D248, E260, and N262.

The protein belongs to the RimK family. It depends on Mg(2+) as a cofactor. The cofactor is Mn(2+).

The protein is Probable alpha-L-glutamate ligase of Vibrio atlanticus (strain LGP32) (Vibrio splendidus (strain Mel32)).